A 943-amino-acid polypeptide reads, in one-letter code: 2-oxoglutarate dehydrogenase E1 component (943 aa).

The protein belongs to the alpha-ketoglutarate dehydrogenase family. As to quaternary structure, homodimer. Part of the 2-oxoglutarate dehydrogenase (OGDH) complex composed of E1 (2-oxoglutarate dehydrogenase), E2 (dihydrolipoamide succinyltransferase) and E3 (dihydrolipoamide dehydrogenase); the complex contains multiple copies of the three enzymatic components (E1, E2 and E3). The cofactor is thiamine diphosphate.

It catalyses the reaction N(6)-[(R)-lipoyl]-L-lysyl-[protein] + 2-oxoglutarate + H(+) = N(6)-[(R)-S(8)-succinyldihydrolipoyl]-L-lysyl-[protein] + CO2. E1 component of the 2-oxoglutarate dehydrogenase (OGDH) complex which catalyzes the decarboxylation of 2-oxoglutarate, the first step in the conversion of 2-oxoglutarate to succinyl-CoA and CO(2). The chain is 2-oxoglutarate dehydrogenase E1 component (sucA) from Azotobacter vinelandii.